The primary structure comprises 1017 residues: Voltage-gated delayed rectifier potassium channel KCNH4 (1017 aa).

Residues 1–232 (MPVMKGLLAP…YSIPKAVWDG (232 aa)) are Cytoplasmic-facing. The region spanning 14–90 (FLDTIATRFD…QRLQKALEGH (77 aa)) is the PAS domain. Positions 93 to 145 (HRAEICFYRKDGSAFWCLLDMMPIKNELGEVVLFLFSFKDISQSGGPGLGSPG) constitute a PAC domain. The tract at residues 139 to 170 (PGLGSPGIHGDNNNHENSLGRRGASSRLRSTR) is disordered. The helical transmembrane segment at 233–253 (LILLATFYVAVTVPYNVCFAG) threads the bilayer. The Extracellular segment spans residues 254 to 262 (DDDTPITSR). A helical transmembrane segment spans residues 263-283 (HTLVSDIAVEMLFILDIILNF). Residues 284-305 (RTTYVSQSGQVVSAPRSIGLHY) lie on the Cytoplasmic side of the membrane. A helical membrane pass occupies residues 306-326 (LATWFFVDLIAALPFDLLYVF). Over 327–334 (NITVTSLV) the chain is Extracellular. Residues 335-355 (HLLKTVRLLRLLRLLQKLERY) traverse the membrane as a helical; Voltage-sensor segment. Over 356-364 (SQCSAVVLT) the chain is Cytoplasmic. A helical membrane pass occupies residues 365-385 (LLMSVFALLAHWMACVWYVIG). Over 386 to 427 (RREMEANDPLLWDIGWLHELGKRLEEPYVNGSAGGPSRRSAY) the chain is Extracellular. N-linked (GlcNAc...) asparagine glycosylation occurs at asparagine 415. The segment at residues 428 to 448 (IAALYFTLSSLTSVGFGNVCA) is an intramembrane region (pore-forming). The short motif at 440–445 (SVGFGN) is the Selectivity filter element. Over 449 to 454 (NTDAEK) the chain is Extracellular. A helical transmembrane segment spans residues 455–475 (IFSICTMLIGALMHAVVFGNV). At 476–1017 (TAIIQRMYSR…SFQSGSDTFH (542 aa)) the chain is on the cytoplasmic side. The tract at residues 557 to 621 (LFGAASRGCL…AILGKGDLIG (65 aa)) is cNMP-binding domain. Disordered regions lie at residues 690–749 (GSEN…PNLS) and 771–870 (LVSS…ELAT). The segment covering 703-726 (PRLSQARSDTLGSSSDKTLPSITE) has biased composition (polar residues). Composition is skewed to low complexity over residues 771 to 786 (LVSS…PALA) and 806 to 820 (PPQL…FGPP). Residues 873–907 (AEEVKEKVCRLNQEISRLNQEVSQLSRELRQVMGL) adopt a coiled-coil conformation. Residues 972–1017 (SELRSSMVPPFPSEPDPLGPSPVPEASPLTPSLLKHSFQSGSDTFH) form a disordered region. The segment covering 980–996 (PPFPSEPDPLGPSPVPE) has biased composition (pro residues). Residues 1008-1017 (SFQSGSDTFH) show a composition bias toward polar residues.

This sequence belongs to the potassium channel family. H (Eag) (TC 1.A.1.20) subfamily. Kv12.3/KCNH4 sub-subfamily. In terms of assembly, the potassium channel is probably composed of a homo- or heterotetrameric complex of pore-forming alpha subunits that can associate with modulating beta subunits. As to expression, highly expressed in adult testis, and in adult and embryonic brain. In adult brain found in piriform cortex, olfactory tubercle, cerebral cortex, hippocampus pyramidial cells and dentate gyrus and basal ganglia of caudate/putamen and accumbens nucleus. Detected at intermediate levels in lung, spinal cord, and pituitary.

The protein localises to the membrane. The enzyme catalyses K(+)(in) = K(+)(out). Its function is as follows. Pore-forming (alpha) subunit of a voltage-gated delayed rectifier. Activates at more negative voltages, exhibits fast prepulse-independent activation kinetics and deactivates much more slowly, but shows no inactivation. This chain is Voltage-gated delayed rectifier potassium channel KCNH4, found in Rattus norvegicus (Rat).